We begin with the raw amino-acid sequence, 504 residues long: Endochitinase (504 aa).

Residues 1-22 (MNRTTLILFFIILSNTITVIHG) form the signal peptide. Positions 23–392 (YVRGCYYTNW…NAISSELEGE (370 aa)) constitute a GH18 domain. Cys27 and Cys52 form a disulfide bridge. Chitin is bound by residues 78-79 (TE) and 105-108 (GGYN). The active-site Proton donor is Glu148. Chitin is bound by residues Tyr149, 212-215 (MSYD), and Trp362. Residues 389 to 450 (LEGESENPEI…YDTDETEGQE (62 aa)) form a disordered region. Over residues 396–408 (PEITTEEPSITET) the composition is skewed to low complexity. 2 tandem repeats follow at residues 407 to 420 (ETEA…EETS) and 421 to 434 (ETEA…EETS). Positions 407–448 (ETEAYETDETEETSETEAYDTDETEETSETEATTYDTDETEG) are 3 X 14 AA approximate tandem repeats of E-T-E-A-Y-[ED]-T-D-E-T-E-E-T-S. Residues 409–435 (EAYETDETEETSETEAYDTDETEETSE) are compositionally biased toward acidic residues. Residues 435-448 (ETEATTYDTDETEG) form a 3; approximate repeat. One can recognise a Chitin-binding type-2 domain in the interval 448 to 504 (GQECPERDGLFPHPTDCHLFIQCANNIAYVMQCPATTFFNDAIKVCDHMTNAPDTCI). Residues Cys480 and Cys493 are joined by a disulfide bond.

The protein belongs to the glycosyl hydrolase 18 family. Chitinase class II subfamily. In terms of processing, O-glycosylated.

The catalysed reaction is Random endo-hydrolysis of N-acetyl-beta-D-glucosaminide (1-&gt;4)-beta-linkages in chitin and chitodextrins.. Microfilarial chitinase, which may function to degrade chitin-containing structures in the micro-filaria or in its mosquito vector during parasite development and transmission. This Brugia malayi (Filarial nematode worm) protein is Endochitinase.